A 313-amino-acid polypeptide reads, in one-letter code: Glutathione synthetase (313 aa).

The ATP-grasp domain occupies 125–309 (KIFVTEFADL…IASLFWDAVE (185 aa)). 151 to 207 (RKEFGDIIVKPLYGNGGAGIFHLHEADRNLASLLEMFGQLFREPYIVQRYLKDVRKG) is a binding site for ATP. Positions 280 and 282 each coordinate Mg(2+).

It belongs to the prokaryotic GSH synthase family. Mg(2+) is required as a cofactor. It depends on Mn(2+) as a cofactor.

The enzyme catalyses gamma-L-glutamyl-L-cysteine + glycine + ATP = glutathione + ADP + phosphate + H(+). The protein operates within sulfur metabolism; glutathione biosynthesis; glutathione from L-cysteine and L-glutamate: step 2/2. This Mesorhizobium japonicum (strain LMG 29417 / CECT 9101 / MAFF 303099) (Mesorhizobium loti (strain MAFF 303099)) protein is Glutathione synthetase.